The following is a 383-amino-acid chain: Dual-specificity RNA methyltransferase RlmN (383 aa).

Residue E93 is the Proton acceptor of the active site. The region spanning E99–D339 is the Radical SAM core domain. A disulfide bridge links C106 with C344. [4Fe-4S] cluster contacts are provided by C113, C117, and C120. S-adenosyl-L-methionine-binding positions include G170 to E171, S202, S224 to H226, and N301. C344 (S-methylcysteine intermediate) is an active-site residue.

This sequence belongs to the radical SAM superfamily. RlmN family. The cofactor is [4Fe-4S] cluster.

It is found in the cytoplasm. The enzyme catalyses adenosine(2503) in 23S rRNA + 2 reduced [2Fe-2S]-[ferredoxin] + 2 S-adenosyl-L-methionine = 2-methyladenosine(2503) in 23S rRNA + 5'-deoxyadenosine + L-methionine + 2 oxidized [2Fe-2S]-[ferredoxin] + S-adenosyl-L-homocysteine. It carries out the reaction adenosine(37) in tRNA + 2 reduced [2Fe-2S]-[ferredoxin] + 2 S-adenosyl-L-methionine = 2-methyladenosine(37) in tRNA + 5'-deoxyadenosine + L-methionine + 2 oxidized [2Fe-2S]-[ferredoxin] + S-adenosyl-L-homocysteine. Specifically methylates position 2 of adenine 2503 in 23S rRNA and position 2 of adenine 37 in tRNAs. m2A2503 modification seems to play a crucial role in the proofreading step occurring at the peptidyl transferase center and thus would serve to optimize ribosomal fidelity. The chain is Dual-specificity RNA methyltransferase RlmN from Ralstonia nicotianae (strain ATCC BAA-1114 / GMI1000) (Ralstonia solanacearum).